The sequence spans 991 residues: Transcription factor ROB1 (991 aa).

The zn(2)-C6 fungal-type DNA-binding region spans 17-43 (CTVCRTIKRKCDGNTPCSNCLKRNQEC). Disordered stretches follow at residues 150–188 (LNQQ…ISLA), 792–875 (FYAQ…EDNP), and 901–959 (QEEG…PQLP). A compositionally biased stretch (low complexity) spans 152-168 (QQQQQQQPSPQSLSQSS). Residues 169–187 (ASEVSTRSSPASPNSTISL) are compositionally biased toward polar residues. Residues 795-806 (QQQQQQQQQQQQ) show a composition bias toward low complexity. Basic and acidic residues-rich tracts occupy residues 807–817 (PKHEYHDHQQE) and 825–855 (QEEH…YPMK). Residues 907–931 (QQQQQQQQEQVQQEQVQQEQVQQDQ) are compositionally biased toward low complexity.

Its subcellular location is the nucleus. In terms of biological role, transcription factor that mediates conventional biofilm formation and plays a key role in microcolony formation under both flow and static conditions and to epithelial surfaces. Modulates infection of mammalian hosts. The chain is Transcription factor ROB1 from Candida albicans (strain SC5314 / ATCC MYA-2876) (Yeast).